Reading from the N-terminus, the 305-residue chain is Methionyl-tRNA formyltransferase (305 aa).

Ser111–Pro114 is a (6S)-5,6,7,8-tetrahydrofolate binding site.

The protein belongs to the Fmt family.

The catalysed reaction is L-methionyl-tRNA(fMet) + (6R)-10-formyltetrahydrofolate = N-formyl-L-methionyl-tRNA(fMet) + (6S)-5,6,7,8-tetrahydrofolate + H(+). In terms of biological role, attaches a formyl group to the free amino group of methionyl-tRNA(fMet). The formyl group appears to play a dual role in the initiator identity of N-formylmethionyl-tRNA by promoting its recognition by IF2 and preventing the misappropriation of this tRNA by the elongation apparatus. This is Methionyl-tRNA formyltransferase from Campylobacter jejuni subsp. jejuni serotype O:2 (strain ATCC 700819 / NCTC 11168).